We begin with the raw amino-acid sequence, 153 residues long: Guanyl-specific ribonuclease N1 (153 aa).

Positions 1 to 20 (MVQLLSAFVSLLSVVAVSGA) are cleaved as a signal peptide. Positions 21–49 (AIPAPAPEAVVDVAPETATIEPTGNFTAQ) are excised as a propeptide. 2 disulfides stabilise this stretch: C51-C59 and C55-C152. H89 is a catalytic residue. The Proton acceptor role is filled by E107. The active-site Proton donor is H141.

Belongs to the ribonuclease N1/T1 family.

It catalyses the reaction [RNA] containing guanosine + H2O = an [RNA fragment]-3'-guanosine-3'-phosphate + a 5'-hydroxy-ribonucleotide-3'-[RNA fragment].. The polypeptide is Guanyl-specific ribonuclease N1 (grn) (Neurospora crassa (strain ATCC 24698 / 74-OR23-1A / CBS 708.71 / DSM 1257 / FGSC 987)).